The chain runs to 120 residues: C-C motif chemokine 27 (120 aa).

Residues 1–25 form the signal peptide; sequence MMEGLSPASSLPLLLLLLSPAPEAA. Disulfide bonds link cysteine 34/cysteine 63 and cysteine 35/cysteine 78.

It belongs to the intercrine beta (chemokine CC) family. Monomer, dimer, and tetramer. Heparin avidly promotes oligomerization. Interacts with TNFAIP6 (via Link domain). As to expression, isoform 1 is predominantly expressed in placenta and weakly in skin. Isoform 2 is predominantly expressed in testes and brain, weakly in kidney and liver and even lower in heart and muscle. Low expression of both isoforms in other tissues.

It is found in the secreted. Its subcellular location is the nucleus. Chemotactic factor that attracts skin-associated memory T-lymphocytes. May play a role in mediating homing of lymphocytes to cutaneous sites. May play a role in cell migration during embryogenesis. Nuclear forms may facilitate cellular migration by inducing cytoskeletal relaxation. Binds to CCR10. The sequence is that of C-C motif chemokine 27 (Ccl27) from Mus musculus (Mouse).